Consider the following 360-residue polypeptide: Probable nuclear hormone receptor HR38 (360 aa).

The segment at 1–21 (GSSSPGVAPADNTGPRAAPSS) is disordered. The nuclear receptor DNA-binding region spans 23-98 (SQLCAVCGDT…VGMVKEVVRT (76 aa)). 2 consecutive NR C4-type zinc fingers follow at residues 26–46 (CAVC…CEGC) and 62–86 (CLAE…FQKC). Residues 122–357 (PPISLITALV…PLIENMFRAS (236 aa)) form the NR LBD domain.

It belongs to the nuclear hormone receptor family. NR4 subfamily. In terms of assembly, forms a heterodimer with USP.

The protein resides in the nucleus. The sequence is that of Probable nuclear hormone receptor HR38 (HR38) from Bombyx mori (Silk moth).